We begin with the raw amino-acid sequence, 482 residues long: Aspartic proteinase 36 (482 aa).

Residues 1-27 (MVTTMDPSRISRIVAVVFVLVIQVVSG) form the signal peptide. Residue asparagine 32 is glycosylated (N-linked (GlcNAc...) asparagine). The 352-residue stretch at 78–429 (YFTKIKLGSP…DLENEVIGWA (352 aa)) folds into the Peptidase A1 domain. Residue aspartate 96 is part of the active site. N-linked (GlcNAc...) asparagine glycosylation is found at asparagine 178, asparagine 204, and asparagine 226. Aspartate 310 is an active-site residue. Cysteines 347 and 388 form a disulfide. Asparagine 432 carries N-linked (GlcNAc...) asparagine glycosylation. The GPI-anchor amidated serine moiety is linked to residue serine 456. Positions 457–482 (AASSVMNGTLVTLLSILIWVFHSFTS) are cleaved as a propeptide — removed in mature form. N-linked (GlcNAc...) asparagine glycosylation occurs at asparagine 463.

It belongs to the peptidase A1 family. Highly expressed in pollen and pollen tubes. Mostly expressed in roots, flowers and inflorescence, and at lower levels in stems, seedlings and siliques.

It is found in the cell membrane. Its subcellular location is the cytoplasm. It localises to the cytosol. Displays aspartic proteolytic activity. Together with A39, contributes to pollen and ovule development, including the apical cell wall constitution of the growing pollen tubes. The polypeptide is Aspartic proteinase 36 (Arabidopsis thaliana (Mouse-ear cress)).